A 1174-amino-acid polypeptide reads, in one-letter code: Ankyrin repeat and LEM domain-containing protein 2 homolog (1174 aa).

Composition is skewed to low complexity over residues 37–56 (NPAS…SAAS), 150–164 (SSPT…SSPT), 174–198 (LGSN…SSSN), and 205–219 (QQQM…PQQP). Disordered regions lie at residues 37-74 (NPAS…YEDP) and 141-230 (PIIS…PFRA). The ANK repeat unit spans residues 338-367 (RGETPLHFAAKNGHVAMVEVLVSYPECKSL). Disordered stretches follow at residues 519–543 (AEAT…HNNN) and 961–981 (GSSS…SPGI). The span at 521–532 (ATSSPKPTKNVP) shows a compositional bias: polar residues. The span at 533 to 543 (NGTNECEHNNN) shows a compositional bias: low complexity.

It belongs to the ANKLE2 family.

The protein resides in the endoplasmic reticulum. The protein localises to the nucleus envelope. It is found in the cytoplasm. Involved in brain development probably by regulating asymmetric division of neuroblasts. Regulates neuroblast asymmetric cell division by controlling asymmetric protein localization of Mira, Baz, Par-6 and aPKC, and spindle alignment. Also, regulates the localization of kinase Ball during mitosis, specifically maintaining Ball in the nucleus during interphase. Required for proper ER and nuclear envelope morphology in neuroblasts. This is Ankyrin repeat and LEM domain-containing protein 2 homolog from Drosophila melanogaster (Fruit fly).